The primary structure comprises 397 residues: Elongation factor Tu (397 aa).

A tr-type G domain is found at 10 to 206 (KPHVNIGTIG…AVDENIPQPE (197 aa)). Residues 19-26 (GHVDHGKT) form a G1 region. 19-26 (GHVDHGKT) lines the GTP pocket. Thr26 lines the Mg(2+) pocket. The tract at residues 62–66 (GITIS) is G2. Positions 83-86 (DCPG) are G3. GTP contacts are provided by residues 83-87 (DCPGH) and 138-141 (NKAD). The tract at residues 138–141 (NKAD) is G4. The interval 176–178 (SAL) is G5.

Belongs to the TRAFAC class translation factor GTPase superfamily. Classic translation factor GTPase family. EF-Tu/EF-1A subfamily. In terms of assembly, monomer.

The protein localises to the cytoplasm. The catalysed reaction is GTP + H2O = GDP + phosphate + H(+). GTP hydrolase that promotes the GTP-dependent binding of aminoacyl-tRNA to the A-site of ribosomes during protein biosynthesis. In Streptomyces cinnamoneus (Streptoverticillium cinnamoneum), this protein is Elongation factor Tu.